A 503-amino-acid polypeptide reads, in one-letter code: REST corepressor 2 (503 aa).

The segment at 1 to 62 (MPSVMEKSHG…IPECKPDNTS (62 aa)) is disordered. In terms of domain architecture, ELM2 spans 41–126 (SMIRVGSDYQ…RSLADLANFT (86 aa)). An SANT 1 domain is found at 127 to 178 (PFPEEWSVEDKVLFEQAFSFHGKSFQRIQQMLPEKLIPSLVKYYYSWKKTRS). Coiled coils occupy residues 182 to 206 (VMDR…DQIK) and 286 to 314 (QLET…SLEG). One can recognise an SANT 2 domain in the interval 327–378 (KLNARWTTDEQLLAVQAVRKYGKDFQAISEVLGNKTPSQVKTFFISYRRRFN). The segment at 385-503 (EWEAEQEPSP…VGSHAESTFS (119 aa)) is disordered. Residues 399–412 (TDMSNKTSGSSQTP) show a composition bias toward polar residues. Positions 423–442 (SVSSSSQPAPPAAAAAASLS) are enriched in low complexity.

It belongs to the CoREST family.

The protein resides in the nucleus. In terms of biological role, may act as a component of a corepressor complex that represses transcription. The polypeptide is REST corepressor 2 (rcor2) (Xenopus laevis (African clawed frog)).